Consider the following 322-residue polypeptide: Malate dehydrogenase (322 aa).

NAD(+)-binding positions include 10-15 and D34; that span reads GSGQIG. Residues R83 and R89 each contribute to the substrate site. Residues N96 and 119 to 121 contribute to the NAD(+) site; that span reads ITN. Positions 121 and 152 each coordinate substrate. H176 (proton acceptor) is an active-site residue.

Belongs to the LDH/MDH superfamily. MDH type 3 family.

The enzyme catalyses (S)-malate + NAD(+) = oxaloacetate + NADH + H(+). Its function is as follows. Catalyzes the reversible oxidation of malate to oxaloacetate. The protein is Malate dehydrogenase of Rhodopseudomonas palustris (strain HaA2).